The sequence spans 186 residues: Ran guanine nucleotide release factor (186 aa).

The segment at Asp27 to Asp70 is interaction with RAN.

The protein belongs to the MOG1 family. Monomer. Interacts with RAN, both RAN-GTP and RAN-GDP. Competes with RCC1 for a common binding site on RAN and thereby inhibits RCC1-mediated nucleotide exchange. Forms a complex with RAN-GTP and RANBP1. Interacts with the cytoplasmic loop 2 of SCN5A.

The protein resides in the nucleus. It localises to the cytoplasm. It is found in the perinuclear region. The protein localises to the cell membrane. May regulate the intracellular trafficking of RAN. Promotes guanine nucleotide release from RAN and inhibits binding of new GTP by preventing the binding of the RAN guanine nucleotide exchange factor RCC1. Regulates the levels of GTP-bound RAN in the nucleus, and thereby plays a role in the regulation of RAN-dependent mitotic spindle dynamics. Enhances the expression of SCN5A at the cell membrane in cardiomyocytes. This Bos taurus (Bovine) protein is Ran guanine nucleotide release factor (RANGRF).